The chain runs to 255 residues: MFKIGNFTLNSRLLLGTGKFDNEEIQTQAIAAAETEVLTFAVRRMNLYDKDLPNPLAKVDLSKFITFPNTAGAKTAKEAVRIAEIANHAGVCDMIKVEVIGDDETLLPDPLETYEACKVLLEKGYTVCPYISNDVVLAKRLEELGVHAIMPLASPIGTGRGINNPLNLRYIIERVNVPVIVDAGIGSPKDACHAMELGADGILLNTAISSAADPVKMAEAMNKGISAGRLSYEAGRIPVKYTAQASSPTEGIGFL.

Residue Lys96 is the Schiff-base intermediate with DXP of the active site. Residues Gly157, 183–184, and 205–206 each bind 1-deoxy-D-xylulose 5-phosphate; these read AG and NT.

It belongs to the ThiG family. Homotetramer. Forms heterodimers with either ThiH or ThiS.

The protein localises to the cytoplasm. The enzyme catalyses [ThiS sulfur-carrier protein]-C-terminal-Gly-aminoethanethioate + 2-iminoacetate + 1-deoxy-D-xylulose 5-phosphate = [ThiS sulfur-carrier protein]-C-terminal Gly-Gly + 2-[(2R,5Z)-2-carboxy-4-methylthiazol-5(2H)-ylidene]ethyl phosphate + 2 H2O + H(+). Its pathway is cofactor biosynthesis; thiamine diphosphate biosynthesis. Catalyzes the rearrangement of 1-deoxy-D-xylulose 5-phosphate (DXP) to produce the thiazole phosphate moiety of thiamine. Sulfur is provided by the thiocarboxylate moiety of the carrier protein ThiS. In vitro, sulfur can be provided by H(2)S. The chain is Thiazole synthase from Staphylococcus saprophyticus subsp. saprophyticus (strain ATCC 15305 / DSM 20229 / NCIMB 8711 / NCTC 7292 / S-41).